The chain runs to 1487 residues: MIERGKYQSLTMVNWNGFFARTFDIDGLVTTLSGGNGAGKSTTMAAFITALIPDQSLLHFRNTTEAGSSQASRDKGLYGKLQPGACYAALDVVNSRNQRLLFAVKLQQVAGRDKKVDIKPFVIQGLPSHVKPTDVLIESVSATQARVRQINEVKESVAQYEGVQFKSFSSIVDYHAQMFEFGVIPKKLRNSSDRSKFYRLIEASLYGGISSAITRSLRDYLLPQNGGVKKAFQDMESALRENRMTLEAIKTTQADRDLFKHLITESTNYVAADYMRHANERHKKLEQSLSLRSELFSSRETLIEQNRLLNQVQQELEMLVESESALEQDYQGASDHLQLVQNALRQQEKIERYQEDLEELNERLEEQSMVVEEAQERVLMAEEQSTVAENEVDSLKTQLADYQQALDVQQTRALQYQQAVQALEKAKVLLSDSTLTAESAQALVAQLTQSEAEQTQALLALKHKLDMSSAAAQQFENALKLVHSIAGQVERAEASRYAKAAIQQARSAQQVVQNENQWRAQHRDLERSLNQQNQAQALVAEYQKAHQVTLDDEVMFEQERERHHAQLDSLEIALEENRELRSEQRRQEQDLQSDITQLQAIAPKWIAANDALEKLREQSGAELADSQSVMSQMQQVLEQEKQLSQAKDKLAERRSQLESEIERLASPGGSNDPRLKGLADTLGGVLLSEIYDDITIDDAPYFSAMYGPARHAIVVSDLSGIEEKLVELDDCPEDLYIIEGDVDAFDDSSIKAEELEGAVCVRLNDRQMRYSRFPVIPLFGRAAREQRLELLRSEREEVVEKHAKAAFDAQKMQRLFQAFNQFVAEHIQVAFAADPEQALVIARDKRNQLTRTLAELEAKEQQMRSQIQNSKQALTMLDKLAPMMAVISDDTIGERFAELEEKIAQLADAKQFLNAHAKAVEQLESQLAVLDADPEQFDALEAQYQSADSQLQALKKQIFALSDLVERRHYFAYADSVDLLSKSSELSEQLKAKLVEAERTRSRYRDELKQQQEQMNQYNQVLASLKSSYQAKLETVQEFKQELAEFGVSADEGALERAIRRRDELHERLHTSRSRKSEYERTLTSTELGMKELAKRLKKVQKEYVELRTFVVAAKAGWCSVLRLARENDVERRLHKRELAYLSAGELRSMSDKSLGALRLAVANNDDLRDALRLSEDNARPERKVLFYIAVYQHLRERIRQDIIHTDDPVEAIEEMEVELARLTEELTMRENRLAISSESVASIIKKTIQREQNRIRMLNQGLSNISFGQVKGVRLNVKVRESHEVLLNGLATQQEQHKDLFETARYTFSEAMAKLFQRVNPHIDMGQRSPQVLGEELLDYRNYLELSIEVNRGSDGWLQAESGALSTGEAIGTGQSILLMVVQSWEEESRRLRSKDIVPCRLLFLDEAARLDAKSISTLFELCDRLDMQLLIAAPENISPEKGTTYKLVRKVFKDHEHVHVVGLRGFGQEQKPKSEAQQMIEEFEA.

34–41 serves as a coordination point for ATP; sequence GGNGAGKS. Coiled coils occupy residues 297 to 426, 460 to 666, 781 to 806, 836 to 1111, and 1210 to 1266; these read SSRE…LEKA, ALKH…RLAS, RAAREQRLELLRSEREEVVEKHAKAA, EQAL…RTFV, and VEAI…LSNI. Residues 667–784 are flexible hinge; that stretch reads PGGSNDPRLK…VIPLFGRAAR (118 aa).

The protein belongs to the SMC family. MukB subfamily. Homodimerization via its hinge domain. Binds to DNA via its C-terminal region. Interacts, and probably forms a ternary complex, with MukE and MukF via its C-terminal region. The complex formation is stimulated by calcium or magnesium. Interacts with tubulin-related protein FtsZ.

The protein resides in the cytoplasm. Its subcellular location is the nucleoid. Its function is as follows. Plays a central role in chromosome condensation, segregation and cell cycle progression. Functions as a homodimer, which is essential for chromosome partition. Involved in negative DNA supercoiling in vivo, and by this means organize and compact chromosomes. May achieve or facilitate chromosome segregation by condensation DNA from both sides of a centrally located replisome during cell division. The sequence is that of Chromosome partition protein MukB from Vibrio vulnificus (strain YJ016).